The following is a 538-amino-acid chain: Probable inorganic phosphate transporter 1-4 (538 aa).

Residues 1–23 (MAGELKVLNALDSAKTQWYHFTA) are Cytoplasmic-facing. A helical transmembrane segment spans residues 24 to 44 (IVIAGMGFFTDAYDLFSISLV). Residues 45–69 (TKLLGRIYYFNPASKSPGSLPPNVS) lie on the Extracellular side of the membrane. A helical transmembrane segment spans residues 70 to 90 (AAVNGVAFCGTLAGQLFFGWL). Over 91-98 (GDKMGRKK) the chain is Cytoplasmic. Residues 99-119 (VYGMTLMLMVICCLASGLSFG) form a helical membrane-spanning segment. At 120-123 (SSAK) the chain is on the extracellular side. A helical membrane pass occupies residues 124–144 (GVMATLCFFRFWLGFGIGGDY). Topologically, residues 145 to 163 (PLSATIMSEYANKRTRGAF) are cytoplasmic. Residues 164–184 (IAAVFAMQGFGNLTGGIVAII) traverse the membrane as a helical segment. Topologically, residues 185–210 (VSAAFKSRFDAPAYRDDRTGSTVPQA) are extracellular. The chain crosses the membrane as a helical span at residues 211 to 231 (DYAWRIVLMFGAIPALLTYYW). Residues 232-294 (RMKMPETARY…RQFLRRHGRH (63 aa)) lie on the Cytoplasmic side of the membrane. Residues 295–315 (LLGTTVCWFVLDIAFYSSNLF) form a helical membrane-spanning segment. Topologically, residues 316-346 (QKDIYTAVQWLPKADTMSALEEMFKISRAQT) are extracellular. The chain crosses the membrane as a helical span at residues 347-367 (LVALCGTIPGYWFTVFFIDII). At 368–369 (GR) the chain is on the cytoplasmic side. A helical transmembrane segment spans residues 370–390 (FVIQLGGFFFMTAFMLGLAVP). Over 391–396 (YHHWTT) the chain is Extracellular. The chain crosses the membrane as a helical span at residues 397-417 (PGNHIGFVVMYAFTFFFANFG). The Cytoplasmic portion of the chain corresponds to 418–440 (PNSTTFIVPAEIFPARLRSTCHG). Residues 441–461 (ISAAAGKAGAIVGSFGFLYAA) traverse the membrane as a helical segment. Topologically, residues 462-481 (QSTDASKTDAGYPPGIGVRN) are extracellular. A helical transmembrane segment spans residues 482–502 (SLFFLAGCNVIGFFFTFLVPE). At 503-538 (SKGKSLEELSGENEDDDDVPEAPATADHRTAPAPPA) the chain is on the cytoplasmic side. Residues 507–538 (SLEELSGENEDDDDVPEAPATADHRTAPAPPA) form a disordered region. The segment covering 511–522 (LSGENEDDDDVP) has biased composition (acidic residues).

The protein belongs to the major facilitator superfamily. Phosphate:H(+) symporter (TC 2.A.1.9) family. As to expression, expressed at low levels in roots.

It localises to the membrane. Functionally, high-affinity transporter for external inorganic phosphate. The polypeptide is Probable inorganic phosphate transporter 1-4 (PHT1-4) (Oryza sativa subsp. japonica (Rice)).